We begin with the raw amino-acid sequence, 257 residues long: Discoidin-2 (257 aa).

A beta-sandwich region spans residues 1–155 (MSVPAGSVSC…SLRWELYALP (155 aa)). One can recognise an F5/8 type C domain in the interval 10–154 (CLANALLNLR…ISLRWELYAL (145 aa)). Asn39, Ser40, and Asp47 together coordinate Ca(2+). Residues 81–83 (RGD) carry the Cell attachment site motif. Residue His84 is modified to Phosphohistidine. The segment at 156-162 (VKSYSNP) is linker. The tract at residues 163–257 (SVQVGEVSIG…FDYVAVEFNN (95 aa)) is lectin-like. A carbohydrate contacts are provided by Asp209, Arg218, and Trp238.

In terms of assembly, homotrimer. The N-terminus is blocked. In terms of tissue distribution, maturing spore cells.

In terms of biological role, galactose-binding lectin. May be necessary for the primary process of spore formation and may be involved in spore coat formation. This is Discoidin-2 (dscE) from Dictyostelium discoideum (Social amoeba).